The primary structure comprises 298 residues: Ethanolamine ammonia-lyase small subunit (298 aa).

Adenosylcob(III)alamin contacts are provided by V210, E231, and C261.

Belongs to the EutC family. As to quaternary structure, the basic unit is a heterodimer which dimerizes to form tetramers. The heterotetramers trimerize; 6 large subunits form a core ring with 6 small subunits projecting outwards. Adenosylcob(III)alamin serves as cofactor.

It localises to the bacterial microcompartment. It carries out the reaction ethanolamine = acetaldehyde + NH4(+). It participates in amine and polyamine degradation; ethanolamine degradation. In terms of biological role, catalyzes the deamination of various vicinal amino-alcohols to oxo compounds. Allows this organism to utilize ethanolamine as the sole source of nitrogen and carbon in the presence of external vitamin B12. The sequence is that of Ethanolamine ammonia-lyase small subunit from Salmonella agona (strain SL483).